The sequence spans 236 residues: Large ribosomal subunit protein uL2 (236 aa).

Residues 1-10 show a composition bias toward polar residues; it reads MGHRITTQSR. Disordered regions lie at residues 1–20 and 202–236; these read MGHRITTQSRGHGGPTYRAP and GGGGHQHAGRPKTVSRGTSPGRKVGHIAARRTGRR. Residues 224–236 are compositionally biased toward basic residues; that stretch reads KVGHIAARRTGRR.

Belongs to the universal ribosomal protein uL2 family. As to quaternary structure, part of the 50S ribosomal subunit. Forms a bridge to the 30S subunit in the 70S ribosome.

One of the primary rRNA binding proteins. Required for association of the 30S and 50S subunits to form the 70S ribosome, for tRNA binding and peptide bond formation. It has been suggested to have peptidyltransferase activity; this is somewhat controversial. Makes several contacts with the 16S rRNA in the 70S ribosome. The sequence is that of Large ribosomal subunit protein uL2 from Methanospirillum hungatei JF-1 (strain ATCC 27890 / DSM 864 / NBRC 100397 / JF-1).